We begin with the raw amino-acid sequence, 215 residues long: Elongation factor Ts (215 aa).

An involved in Mg(2+) ion dislocation from EF-Tu region spans residues Thr80–Val83.

This sequence belongs to the EF-Ts family.

The protein resides in the cytoplasm. Its function is as follows. Associates with the EF-Tu.GDP complex and induces the exchange of GDP to GTP. It remains bound to the aminoacyl-tRNA.EF-Tu.GTP complex up to the GTP hydrolysis stage on the ribosome. This chain is Elongation factor Ts, found in Heliobacterium modesticaldum (strain ATCC 51547 / Ice1).